A 391-amino-acid chain; its full sequence is MFLKNIFIALAIALLVDASPAKRSPGFVTLDFDVIKTPVNATGQEGKVKRQAIPVTLNNEHVSYAADITIGSNKQKFNVIVDTGSSDLWVPDASVTCDKPRPGQSADFCKGKGIYTPKSSTTSQNLGTPFYIGYGDGSSSQGTLYKDTVGFGGASITKQVFADITKTSIPQGILGIGYKTNEAAGDYDNVPVTLKNQGVIAKNAYSLYLNSPNAATGQIIFGGVDKAKYSGSLIAVPVTSDRELRITLNSLKAVGKNINGNIDVLLDSGTTITYLQQDVAQDIIDAFQAELKSDGQGHTFYVTDCQTSGTVDFNFDNNAKISVPASEFTAPLSYANGQPYPKCQLLLGISDANILGDNFLRSAYLVYDLDDDKISLAQVKYTSASNIAALT.

A signal peptide spans 1–18 (MFLKNIFIALAIALLVDA). A propeptide spans 19-50 (SPAKRSPGFVTLDFDVIKTPVNATGQEGKVKR) (activation peptide). An N-linked (GlcNAc...) asparagine glycan is attached at asparagine 40. The Peptidase A1 domain occupies 64–377 (YAADITIGSN…DLDDDKISLA (314 aa)). Aspartate 82 is an active-site residue. 82 to 84 (DTG) contacts pepstatin A. Cysteines 97 and 109 form a disulfide. 135 to 136 (GD) is a pepstatin A binding site. Aspartate 241 and aspartate 263 together coordinate Zn(2+). Aspartate 267 is an active-site residue. Position 267–271 (267–271 (DSGTT)) interacts with pepstatin A. A disulfide bond links cysteine 305 and cysteine 343.

It belongs to the peptidase A1 family. Monomer.

It is found in the secreted. The enzyme catalyses Preferential cleavage at the carboxyl of hydrophobic amino acids, but fails to cleave 15-Leu-|-Tyr-16, 16-Tyr-|-Leu-17 and 24-Phe-|-Phe-25 of insulin B chain. Activates trypsinogen, and degrades keratin.. With respect to regulation, inhibited by pepstatin A analogs and squash aspartic peptidase inhibitor (SQAPI). In terms of biological role, secreted aspartic peptidases (SAPs) are a group of ten acidic hydrolases considered as key virulence factors. These enzymes supply the fungus with nutrient amino acids as well as are able to degrade the selected host's proteins involved in the immune defense. Induces host inflammatory cytokine production in a proteolytic activity-independent way. Plays a role in tissue damage during superficial infection. Moreover, acts toward human hemoglobin though limited proteolysis to generate a variety of antimicrobial hemocidins, enabling to compete with the other microorganisms of the same physiological niche using the microbicidal peptides generated from the host protein. Functionally, plays a key role in defense against host by cleaving histatin-5 (Hst 5), a peptide from human saliva that carries out fungicidal activity. The cleavage rate decreases in an order of SAP2 &gt; SAP9 &gt; SAP3 &gt; SAP7 &gt; SAP4 &gt; SAP1 &gt; SAP8. The first cleavage occurs between residues 'Lys-17' and 'His-18' of Hst 5, giving DSHAKRHHGYKRKFHEK and HHSHRGY peptides. Further fragmentation by SAP1 results in AKRHHGYKRKFHEK and AKRHHGY products. The chain is Secreted aspartic protease 1 from Candida albicans (strain SC5314 / ATCC MYA-2876) (Yeast).